Reading from the N-terminus, the 51-residue chain is Large ribosomal subunit protein bL33 (51 aa).

It belongs to the bacterial ribosomal protein bL33 family.

This Hahella chejuensis (strain KCTC 2396) protein is Large ribosomal subunit protein bL33.